Here is a 369-residue protein sequence, read N- to C-terminus: Glutamate 5-kinase (369 aa).

Position 7 (Lys7) interacts with ATP. Substrate-binding residues include Ser48, Asp135, and Asn147. Residues 167–168 and 208–214 each bind ATP; these read TD and SGGMASK. The PUA domain occupies 275–353; that stretch reads AGALHLDEGA…HEIAALLGIE (79 aa).

Belongs to the glutamate 5-kinase family.

The protein resides in the cytoplasm. The catalysed reaction is L-glutamate + ATP = L-glutamyl 5-phosphate + ADP. Its pathway is amino-acid biosynthesis; L-proline biosynthesis; L-glutamate 5-semialdehyde from L-glutamate: step 1/2. In terms of biological role, catalyzes the transfer of a phosphate group to glutamate to form L-glutamate 5-phosphate. This chain is Glutamate 5-kinase, found in Gloeobacter violaceus (strain ATCC 29082 / PCC 7421).